Consider the following 181-residue polypeptide: Probable calcium-binding protein CML16 (181 aa).

The disordered stretch occupies residues 1–24 (MSNTTEKKMPQQQQVERPTALAPA). EF-hand domains lie at 23 to 58 (PADA…IAPP), 63 to 98 (AGGR…GRGD), 100 to 135 (EHEA…IGEG), and 136 to 171 (CSAE…DAAA). Ca(2+) contacts are provided by aspartate 36, aspartate 38, aspartate 40, arginine 42, glutamate 47, aspartate 76, aspartate 78, aspartate 80, glutamate 87, aspartate 113, aspartate 115, aspartate 117, arginine 119, glutamate 124, aspartate 149, aspartate 151, aspartate 153, cysteine 155, and glutamate 160.

In terms of biological role, potential calcium sensor. This chain is Probable calcium-binding protein CML16 (CML16), found in Oryza sativa subsp. japonica (Rice).